Reading from the N-terminus, the 901-residue chain is Glutamate receptor 2.1 (901 aa).

The first 25 residues, Met1–Ala25, serve as a signal peptide directing secretion. Residues Gln26 to Thr574 are Extracellular-facing. Asn46, Asn53, Asn204, Asn267, Asn331, Asn342, Asn461, Asn477, and Asn536 each carry an N-linked (GlcNAc...) asparagine glycan. A helical membrane pass occupies residues Leu575–Leu595. Residues Glu596 to Asp604 lie on the Cytoplasmic side of the membrane. A helical transmembrane segment spans residues Gly605–Ala625. Over Pro626–Arg629 the chain is Cytoplasmic. The chain crosses the membrane as a helical span at residues Val630 to Thr650. Topologically, residues Gln651–Ser823 are extracellular. A helical transmembrane segment spans residues Phe824–Tyr844. The Cytoplasmic portion of the chain corresponds to Gln845–Asn901.

The protein belongs to the glutamate-gated ion channel (TC 1.A.10.1) family. May form heteromers. In terms of tissue distribution, expressed predominantly in roots. First strongly detected in all cell types of the root except at the apex. Later expressed at the root-shoot junction.

It is found in the membrane. Functionally, glutamate-gated receptor that probably acts as a non-selective cation channel. May be involved in light-signal transduction and calcium homeostasis via the regulation of calcium influx into cells. In Arabidopsis thaliana (Mouse-ear cress), this protein is Glutamate receptor 2.1 (GLR2.1).